A 266-amino-acid chain; its full sequence is Large ribosomal subunit protein eL8 (266 aa).

Residues lysine 11, lysine 20, and lysine 21 each participate in a glycyl lysine isopeptide (Lys-Gly) (interchain with G-Cter in SUMO2) cross-link. The residue at position 34 (lysine 34) is an N6-acetyllysine. Lysine 48 is covalently cross-linked (Glycyl lysine isopeptide (Lys-Gly) (interchain with G-Cter in SUMO2)). Lysine 97 carries the N6-acetyllysine; alternate modification. Residue lysine 97 forms a Glycyl lysine isopeptide (Lys-Gly) (interchain with G-Cter in SUMO2); alternate linkage. Lysine 125 is covalently cross-linked (Glycyl lysine isopeptide (Lys-Gly) (interchain with G-Cter in SUMO2)). An N6-acetyllysine modification is found at lysine 217. Lysine 245 is covalently cross-linked (Glycyl lysine isopeptide (Lys-Gly) (interchain with G-Cter in SUMO2)).

The protein belongs to the eukaryotic ribosomal protein eL8 family. In terms of assembly, component of the large ribosomal subunit. Interacts with CRY1. Interacts with DICER1, AGO2, TARBP2, MOV10 and EIF6; they form a large RNA-induced silencing complex (RISC).

It localises to the cytoplasm. Component of the large ribosomal subunit. The ribosome is a large ribonucleoprotein complex responsible for the synthesis of proteins in the cell. The sequence is that of Large ribosomal subunit protein eL8 (Rpl7a) from Rattus norvegicus (Rat).